Reading from the N-terminus, the 933-residue chain is Isoleucine--tRNA ligase (933 aa).

The 'HIGH' region signature appears at 57–67 (PYANGNIHMGH). L-isoleucyl-5'-AMP is bound at residue glutamate 556. Residues 597 to 601 (KMSKS) carry the 'KMSKS' region motif. Lysine 600 contacts ATP. Residues cysteine 891, cysteine 894, cysteine 911, and cysteine 914 each contribute to the Zn(2+) site.

Belongs to the class-I aminoacyl-tRNA synthetase family. IleS type 1 subfamily. Monomer. The cofactor is Zn(2+).

It localises to the cytoplasm. It catalyses the reaction tRNA(Ile) + L-isoleucine + ATP = L-isoleucyl-tRNA(Ile) + AMP + diphosphate. Its function is as follows. Catalyzes the attachment of isoleucine to tRNA(Ile). As IleRS can inadvertently accommodate and process structurally similar amino acids such as valine, to avoid such errors it has two additional distinct tRNA(Ile)-dependent editing activities. One activity is designated as 'pretransfer' editing and involves the hydrolysis of activated Val-AMP. The other activity is designated 'posttransfer' editing and involves deacylation of mischarged Val-tRNA(Ile). This is Isoleucine--tRNA ligase from Pediococcus pentosaceus (strain ATCC 25745 / CCUG 21536 / LMG 10740 / 183-1w).